The following is a 177-amino-acid chain: B-phycoerythrin beta chain (177 aa).

Phycourobilin contacts are provided by Cys-50 and Cys-61. The residue at position 72 (Asn-72) is an N4-methylasparagine. (2R,3E)-phycoerythrobilin is bound by residues Cys-82 and Cys-158.

It belongs to the phycobiliprotein family. Heteromer of 6 alpha, 6 beta and one gamma chain. Contains two covalently linked phycoerythrobilin chromophores and one covalently linked phycourobilin chromophore.

It is found in the plastid. Its subcellular location is the chloroplast thylakoid membrane. Light-harvesting photosynthetic bile pigment-protein from the phycobiliprotein complex. This is B-phycoerythrin beta chain (cpeB) from Porphyridium purpureum (Red alga).